We begin with the raw amino-acid sequence, 281 residues long: ATP phosphoribosyltransferase (281 aa).

Belongs to the ATP phosphoribosyltransferase family. Long subfamily. Mg(2+) is required as a cofactor.

The protein resides in the cytoplasm. The enzyme catalyses 1-(5-phospho-beta-D-ribosyl)-ATP + diphosphate = 5-phospho-alpha-D-ribose 1-diphosphate + ATP. The protein operates within amino-acid biosynthesis; L-histidine biosynthesis; L-histidine from 5-phospho-alpha-D-ribose 1-diphosphate: step 1/9. Feedback inhibited by histidine. Catalyzes the condensation of ATP and 5-phosphoribose 1-diphosphate to form N'-(5'-phosphoribosyl)-ATP (PR-ATP). Has a crucial role in the pathway because the rate of histidine biosynthesis seems to be controlled primarily by regulation of HisG enzymatic activity. The polypeptide is ATP phosphoribosyltransferase (Corynebacterium diphtheriae (strain ATCC 700971 / NCTC 13129 / Biotype gravis)).